An 81-amino-acid polypeptide reads, in one-letter code: Defensin-like protein 130 (81 aa).

The signal sequence occupies residues 1–21 (MTKNTSLTIFMVVLVIGMLYT). 4 cysteine pairs are disulfide-bonded: Cys32–Cys81, Cys41–Cys63, Cys46–Cys75, and Cys50–Cys77.

This sequence belongs to the DEFL family.

The protein resides in the secreted. The protein is Defensin-like protein 130 (LCR28) of Arabidopsis thaliana (Mouse-ear cress).